The primary structure comprises 642 residues: Chaperone protein DnaK (642 aa).

Phosphothreonine; by autocatalysis is present on threonine 198. Positions 578 to 589 (DDKEAIESRMQK) are enriched in basic and acidic residues. The tract at residues 578 to 642 (DDKEAIESRM…FEEVKDGDKK (65 aa)) is disordered. The span at 603-619 (AEQAAQQGGDAGAQAED) shows a compositional bias: low complexity.

Belongs to the heat shock protein 70 family.

Acts as a chaperone. The chain is Chaperone protein DnaK from Hahella chejuensis (strain KCTC 2396).